Consider the following 341-residue polypeptide: Phosphoribosylformylglycinamidine cyclo-ligase (341 aa).

It belongs to the AIR synthase family.

The protein resides in the cytoplasm. The catalysed reaction is 2-formamido-N(1)-(5-O-phospho-beta-D-ribosyl)acetamidine + ATP = 5-amino-1-(5-phospho-beta-D-ribosyl)imidazole + ADP + phosphate + H(+). It functions in the pathway purine metabolism; IMP biosynthesis via de novo pathway; 5-amino-1-(5-phospho-D-ribosyl)imidazole from N(2)-formyl-N(1)-(5-phospho-D-ribosyl)glycinamide: step 2/2. This Synechocystis sp. (strain ATCC 27184 / PCC 6803 / Kazusa) protein is Phosphoribosylformylglycinamidine cyclo-ligase.